Here is a 359-residue protein sequence, read N- to C-terminus: AA9 family lytic polysaccharide monooxygenase C (359 aa).

Positions 1 to 16 are cleaved as a signal peptide; the sequence is MKTGSILAALVASASA. Cu(2+) is bound by residues histidine 17 and histidine 99. 2 disulfides stabilise this stretch: cysteine 55/cysteine 185 and cysteine 155/cysteine 243. Residues histidine 171 and glutamine 180 each contribute to the O2 site. Tyrosine 182 is a binding site for Cu(2+). Residues asparagine 189 and asparagine 284 are each glycosylated (N-linked (GlcNAc...) asparagine). The disordered stretch occupies residues 244-320; sequence PAGGSGGSSP…NPQPTNGGNS (77 aa). Positions 251-296 are enriched in low complexity; sequence SSPAPATTASTPKPTSASAPKPVSTTASTPKPTNGSGSGTGAAHST. The segment covering 307–319 has biased composition (polar residues); the sequence is TKASNPQPTNGGN. The CBM1 domain maps to 323 to 358; the sequence is RAAALYGQCGGKGWTGPTSCASGTCKFSNDWYSQCL.

Belongs to the polysaccharide monooxygenase AA9 family. It depends on Cu(2+) as a cofactor.

The protein localises to the secreted. The catalysed reaction is [(1-&gt;4)-beta-D-glucosyl]n+m + reduced acceptor + O2 = 4-dehydro-beta-D-glucosyl-[(1-&gt;4)-beta-D-glucosyl]n-1 + [(1-&gt;4)-beta-D-glucosyl]m + acceptor + H2O.. Activity in inhibited by excessive amounts of H(2)O(2). Functionally, lytic polysaccharide monooxygenase (LPMO) that depolymerizes crystalline and amorphous polysaccharides via the oxidation of scissile alpha- or beta-(1-4)-glycosidic bonds, yielding C4 oxidation products. Catalysis by LPMOs requires the reduction of the active-site copper from Cu(II) to Cu(I) by a reducing agent and H(2)O(2) or O(2) as a cosubstrate. Degrades various hemicelluloses, in particular xyloglucan. Active on tamarind xyloglucan and konjac glucomannan. Acts on the glucose backbone of xyloglucan, accepting various substitutions (xylose, galactose) in almost allpositions. In contrast to all previously characterized LPMOs, which are active only on polysaccharides, is able to cleave soluble cello-oligosaccharides as short as a tetramer. The cello-oligosaccharide products released by this enzyme contain a C4 gemdiol/keto group at the non-reducing end. Binds to the inner wood cell wall layer and consumes enzymatically generated H(2)O(2). This is AA9 family lytic polysaccharide monooxygenase C (gh61-3) from Neurospora crassa (strain ATCC 24698 / 74-OR23-1A / CBS 708.71 / DSM 1257 / FGSC 987).